A 505-amino-acid polypeptide reads, in one-letter code: tRNA-2-methylthio-N(6)-dimethylallyladenosine synthase (505 aa).

The segment at M1 to L39 is disordered. One can recognise an MTTase N-terminal domain in the interval M47 to R162. [4Fe-4S] cluster contacts are provided by C56, C92, C125, C194, C198, and C201. Positions P180–R413 constitute a Radical SAM core domain. In terms of domain architecture, TRAM spans A416 to G479.

Belongs to the methylthiotransferase family. MiaB subfamily. In terms of assembly, monomer. [4Fe-4S] cluster is required as a cofactor.

It localises to the cytoplasm. The enzyme catalyses N(6)-dimethylallyladenosine(37) in tRNA + (sulfur carrier)-SH + AH2 + 2 S-adenosyl-L-methionine = 2-methylsulfanyl-N(6)-dimethylallyladenosine(37) in tRNA + (sulfur carrier)-H + 5'-deoxyadenosine + L-methionine + A + S-adenosyl-L-homocysteine + 2 H(+). In terms of biological role, catalyzes the methylthiolation of N6-(dimethylallyl)adenosine (i(6)A), leading to the formation of 2-methylthio-N6-(dimethylallyl)adenosine (ms(2)i(6)A) at position 37 in tRNAs that read codons beginning with uridine. In Deinococcus radiodurans (strain ATCC 13939 / DSM 20539 / JCM 16871 / CCUG 27074 / LMG 4051 / NBRC 15346 / NCIMB 9279 / VKM B-1422 / R1), this protein is tRNA-2-methylthio-N(6)-dimethylallyladenosine synthase.